The following is a 176-amino-acid chain: Ribosome maturation factor RimM (176 aa).

The region spanning 96–176 (PADEFYWRDL…QILVDWDPDF (81 aa)) is the PRC barrel domain.

It belongs to the RimM family. Binds ribosomal protein uS19.

The protein resides in the cytoplasm. Functionally, an accessory protein needed during the final step in the assembly of 30S ribosomal subunit, possibly for assembly of the head region. Essential for efficient processing of 16S rRNA. May be needed both before and after RbfA during the maturation of 16S rRNA. It has affinity for free ribosomal 30S subunits but not for 70S ribosomes. In Shewanella baltica (strain OS223), this protein is Ribosome maturation factor RimM.